The primary structure comprises 457 residues: tRNA-2-methylthio-N(6)-dimethylallyladenosine synthase (457 aa).

Positions 3–120 constitute an MTTase N-terminal domain; sequence KKVYVKTFGC…LPQMIDARRT (118 aa). 6 residues coordinate [4Fe-4S] cluster: C12, C49, C83, C157, C161, and C164. The 235-residue stretch at 143–377 folds into the Radical SAM core domain; it reads RVEGPTAFVS…QATIEENVAR (235 aa). In terms of domain architecture, TRAM spans 380–447; sequence QSMVGKVERI…PHSLRGELVL (68 aa).

Belongs to the methylthiotransferase family. MiaB subfamily. As to quaternary structure, monomer. Requires [4Fe-4S] cluster as cofactor.

The protein resides in the cytoplasm. It carries out the reaction N(6)-dimethylallyladenosine(37) in tRNA + (sulfur carrier)-SH + AH2 + 2 S-adenosyl-L-methionine = 2-methylsulfanyl-N(6)-dimethylallyladenosine(37) in tRNA + (sulfur carrier)-H + 5'-deoxyadenosine + L-methionine + A + S-adenosyl-L-homocysteine + 2 H(+). Functionally, catalyzes the methylthiolation of N6-(dimethylallyl)adenosine (i(6)A), leading to the formation of 2-methylthio-N6-(dimethylallyl)adenosine (ms(2)i(6)A) at position 37 in tRNAs that read codons beginning with uridine. This chain is tRNA-2-methylthio-N(6)-dimethylallyladenosine synthase, found in Burkholderia multivorans (strain ATCC 17616 / 249).